The sequence spans 387 residues: tRNA pseudouridine synthase B (387 aa).

Catalysis depends on Asp-43, which acts as the Nucleophile.

It belongs to the pseudouridine synthase TruB family. Type 1 subfamily.

It catalyses the reaction uridine(55) in tRNA = pseudouridine(55) in tRNA. Responsible for synthesis of pseudouridine from uracil-55 in the psi GC loop of transfer RNAs. The sequence is that of tRNA pseudouridine synthase B from Bifidobacterium longum (strain DJO10A).